A 142-amino-acid polypeptide reads, in one-letter code: MSRGAKPPSQRQLRVGEELRHAIAMVIERGEFRDPDLLGRAITVTEVRVSPDLRNATVFVVPLGGGDVAPILAGLKRAKAFLRHEISRMVELRAVPDLWFQEDTTFDTASRIDSILNSPEVRRDIDHAPAEDEFPTDGDDGQ.

Basic and acidic residues predominate over residues 120–130 (EVRRDIDHAPA). The segment at 120–142 (EVRRDIDHAPAEDEFPTDGDDGQ) is disordered. Residues 131–142 (EDEFPTDGDDGQ) show a composition bias toward acidic residues.

It belongs to the RbfA family. As to quaternary structure, monomer. Binds 30S ribosomal subunits, but not 50S ribosomal subunits or 70S ribosomes.

It localises to the cytoplasm. In terms of biological role, one of several proteins that assist in the late maturation steps of the functional core of the 30S ribosomal subunit. Associates with free 30S ribosomal subunits (but not with 30S subunits that are part of 70S ribosomes or polysomes). Required for efficient processing of 16S rRNA. May interact with the 5'-terminal helix region of 16S rRNA. This is Ribosome-binding factor A from Paramagnetospirillum magneticum (strain ATCC 700264 / AMB-1) (Magnetospirillum magneticum).